The following is a 180-amino-acid chain: Beta-lactoglobulin (180 aa).

The signal sequence occupies residues 1 to 18 (MKCLLLALGLALACAAQA). Cystine bridges form between Cys-84–Cys-178, Cys-124–Cys-137, and Cys-124–Cys-139.

Belongs to the calycin superfamily. Lipocalin family. As to quaternary structure, under physiological conditions beta-lactoglobulin exists as an equilibrium mixture of monomeric and dimeric forms. Interaction with LMBR1L is controversial. Post-translationally, alternate disulfide bonds occur in equal amounts. Synthesized in mammary gland and secreted in milk.

The protein localises to the secreted. Functionally, primary component of whey, it binds retinol and is probably involved in the transport of that molecule. The polypeptide is Beta-lactoglobulin (LGB) (Bubalus bubalis (Domestic water buffalo)).